We begin with the raw amino-acid sequence, 236 residues long: MTENNEKDIQVTEAVAAPATETAAPATTDDRRGGARRGERGDRGQGRGDRGGRGGRDGGREAEKSQFVERVVTINRVSKVVKGGRRFSFTALVVVGDGNGMVGVGYGKAKEVPAAIAKGVEEAKKSFFRVPRIGSTIPHRVQGEAAAGVVMLRPASAGTGVIAGGPVRAVLECVGIHDILSKSLGSSNAINIVHATVDALKRLEEPAAVAARRGLPLDEIAPAAMVKALMNQKAGV.

Residues 1 to 10 (MTENNEKDIQ) show a composition bias toward basic and acidic residues. Residues 1 to 64 (MTENNEKDIQ…GRDGGREAEK (64 aa)) are disordered. Low complexity predominate over residues 11 to 27 (VTEAVAAPATETAAPAT). Positions 28-64 (TDDRRGGARRGERGDRGQGRGDRGGRGGRDGGREAEK) are enriched in basic and acidic residues. In terms of domain architecture, S5 DRBM spans 67–130 (FVERVVTINR…EEAKKSFFRV (64 aa)).

The protein belongs to the universal ribosomal protein uS5 family. As to quaternary structure, part of the 30S ribosomal subunit. Contacts proteins S4 and S8.

With S4 and S12 plays an important role in translational accuracy. In terms of biological role, located at the back of the 30S subunit body where it stabilizes the conformation of the head with respect to the body. The sequence is that of Small ribosomal subunit protein uS5 from Arthrobacter sp. (strain FB24).